Reading from the N-terminus, the 132-residue chain is T-cell receptor alpha chain V region CTL-F3 (132 aa).

A signal peptide spans 1 to 22 (MNMRPDTCSVLVLLLMLRRNNG). Residues 23 to 114 (DSVTQTEGLV…DSALYYCALS (92 aa)) are v segment. A glycan (N-linked (GlcNAc...) asparagine) is linked at Asn43. The cysteines at positions 44 and 111 are disulfide-linked. Residues 115–132 (NAGAKLTFGGGTRLTVRP) form a j segment region.

The chain is T-cell receptor alpha chain V region CTL-F3 from Mus musculus (Mouse).